Here is a 156-residue protein sequence, read N- to C-terminus: Pilin-like protein PilA1 (156 aa).

The propeptide at 1–5 (MTRRG) is leader sequence. Position 6 is an N-methylleucine (Leu6). A helical membrane pass occupies residues 6-29 (LTLLELLLVLGILGVLLGLALPLL).

The protein resides in the cell inner membrane. The protein localises to the cell outer membrane. It localises to the periplasm. Functionally, plays an essential role in natural DNA transformation but is not required for pilus biogenesis. The polypeptide is Pilin-like protein PilA1 (pilA1) (Thermus thermophilus (strain ATCC BAA-163 / DSM 7039 / HB27)).